We begin with the raw amino-acid sequence, 88 residues long: NADH-ubiquinone oxidoreductase chain 4L (88 aa).

3 consecutive transmembrane segments (helical) span residues 1 to 21 (MNLS…NRKN), 22 to 42 (IILM…LVLM), and 55 to 75 (FSIY…SILV).

The protein belongs to the complex I subunit 4L family.

It is found in the mitochondrion membrane. It carries out the reaction a ubiquinone + NADH + 5 H(+)(in) = a ubiquinol + NAD(+) + 4 H(+)(out). Core subunit of the mitochondrial membrane respiratory chain NADH dehydrogenase (Complex I) that is believed to belong to the minimal assembly required for catalysis. Complex I functions in the transfer of electrons from NADH to the respiratory chain. The immediate electron acceptor for the enzyme is believed to be ubiquinone. The chain is NADH-ubiquinone oxidoreductase chain 4L (ND4L) from Schizophyllum commune (Split gill fungus).